Here is a 633-residue protein sequence, read N- to C-terminus: FAD-binding monooxygenase andJ (633 aa).

FAD-binding positions include 117–120 (TWYW), 129–130 (DT), and Tyr135. 127–129 (MCD) contacts NADP(+). NADP(+) is bound by residues 269–275 (TGASAVQ) and 292–293 (RT).

The protein belongs to the FAD-binding monooxygenase family. It depends on FAD as a cofactor.

Its pathway is secondary metabolite biosynthesis; terpenoid biosynthesis. Functionally, FAD-binding monooxygenase; part of the gene cluster that mediates the biosynthesis of anditomin, a fungal meroterpenoid. The first step of the pathway is the synthesis of 3,5-dimethylorsellinic acid (DMOA) by the polyketide synthase andM. DMOA is then converted to the phthalide compound 5,7-dihydroxy-4,6-dimethylphthalide (DHDMP) by the cytochrome P450 monooxygenase andK, which is further prenylated by the prenyltransferase andD to yield farnesyl-DHDMP. Further epoxidation by the FAD-dependent monooxygenase andE leads to epoxyfarnesyl-DHDMP. The next step involves the terpene cyclase andB that converts epoxyfarnesyl-DHDMP into preandiloid A through opening of the epoxide ring followed by the cyclization of the farnesyl moiety. Preandiloid A is in turn oxidized at the C-3 hydroxyl group to yield preandiloid B by the dehydrogenase andC. The dioxygenase andA is solely responsible for the dehydrogenation of preandiloid B leading to the enone preandiloid C, as well as for the intriguing structural rearrangement to generate the bicyclo[2.2.2]octane core, transforming preandiloid C into andiconin. FAD-binding monooxygenase andJ then produces andilesin D which is reduced by dehydrogenase andI to yield andilesin A. Action of acetyltransferase andG followed by a spontaneous acetate elimination leads then to andilesin B, which is in turn substrate of the short chain dehydrogenase andH to yield andilesin C. Finally, the dioxygenase andF catalyzes the transformation of andilesin C to anditomin. The polypeptide is FAD-binding monooxygenase andJ (Emericella variicolor (Aspergillus stellatus)).